The chain runs to 621 residues: MLMAGQRGAWTMGDVVEKSLEGPLAPSTDEPSQKTGDLVEILNGEKVKFDDAGLSLILQNGLETLRMENALTDVILCVDIQEFSCHRVVLAAASNYFRAMFCNDLKEKYEKRIIIKGVDAETMHTLLDYTYTSKALITKQNVQRVLEAANLFQFLRMVDACASFLTEALNPENCVGILRLADTHSLDSLKKQVQSYIIQNFVQILNSEEFLDLPVDTLHHILKSDDLYVTEEAQVFETVMSWVRHKPSERLCLLPYVLENVRLPLLDPWYFVETVEADPLIRQCPEVFPLLQEARMYHLSGNEIISERTKPRMHEFQSEVFMIIGGCTKDERFVAEVTCLDPLRRSRLEVAKLPLTEHELESENKKWVEFACVTLKNEVYISGGKETQHDVWKYNSSINKWIQIEYLNIGRWRHKMVVLGGKVYVIGGFDGLQRINNVETYDPFHNCWSEAAPLLVHVSSFAATSHKKKLYVIGGGPNGKLATDKTQCYDPSTNKWSLKAAMPVEAKCINAVSFRDRIYVVGGAMRALYAYSPLEDSWCLVTQLSHERASCGIAPCNNRLYITGGRDEKNEVIATVLCWDPEAQKLTEECVLPRGVSHHGSVTIRKSYTHIRRIVPGAVSV.

The BTB domain maps to 72–139; that stretch reads TDVILCVDIQ…TYTSKALITK (68 aa). One can recognise a BACK domain in the interval 174-276; that stretch reads CVGILRLADT…DPWYFVETVE (103 aa). Kelch repeat units follow at residues 320-367, 378-421, 422-468, 470-516, 517-558, and 560-606; these read VFMI…NKKW, EVYI…VLGG, KVYV…SHKK, LYVI…SFRD, RIYV…PCNN, and LYIT…TIRK.

Found in germinal center B-cells.

In terms of biological role, involved in B-lymphocyte antigen receptor signaling and germinal center formation. This is Kelch-like protein 6 (KLHL6) from Homo sapiens (Human).